The sequence spans 468 residues: 6-phospho-beta-galactosidase (468 aa).

5 residues coordinate D-galactose 6-phosphate: glutamine 19, histidine 116, asparagine 159, glutamate 160, and asparagine 297. The active-site Proton donor is the glutamate 160. Glutamate 375 (nucleophile) is an active-site residue. D-galactose 6-phosphate is bound by residues serine 428, tryptophan 429, lysine 435, and tyrosine 437.

It belongs to the glycosyl hydrolase 1 family.

It carries out the reaction a 6-phospho-beta-D-galactoside + H2O = D-galactose 6-phosphate + an alcohol. The protein operates within carbohydrate metabolism; lactose degradation; D-galactose 6-phosphate and beta-D-glucose from lactose 6-phosphate: step 1/1. This Streptococcus pyogenes serotype M5 (strain Manfredo) protein is 6-phospho-beta-galactosidase.